The chain runs to 388 residues: DNA replication and repair protein RecF (388 aa).

Position 30-37 (30-37 (GANGNGKT)) interacts with ATP.

It belongs to the RecF family.

The protein localises to the cytoplasm. Its function is as follows. The RecF protein is involved in DNA metabolism; it is required for DNA replication and normal SOS inducibility. RecF binds preferentially to single-stranded, linear DNA. It also seems to bind ATP. The protein is DNA replication and repair protein RecF of Nocardia farcinica (strain IFM 10152).